A 339-amino-acid polypeptide reads, in one-letter code: Small ribosomal subunit biogenesis GTPase RsgA (339 aa).

Positions 111 to 271 constitute a CP-type G domain; that stretch reads MRGLLKPVAA…LIDSPGIREF (161 aa). GTP is bound by residues 159–162 and 213–221; these read NKAD and GQSGVGKSS. Zn(2+) contacts are provided by cysteine 295, cysteine 300, histidine 302, and cysteine 308.

Belongs to the TRAFAC class YlqF/YawG GTPase family. RsgA subfamily. Monomer. Associates with 30S ribosomal subunit, binds 16S rRNA. The cofactor is Zn(2+).

The protein resides in the cytoplasm. Its function is as follows. One of several proteins that assist in the late maturation steps of the functional core of the 30S ribosomal subunit. Helps release RbfA from mature subunits. May play a role in the assembly of ribosomal proteins into the subunit. Circularly permuted GTPase that catalyzes slow GTP hydrolysis, GTPase activity is stimulated by the 30S ribosomal subunit. The chain is Small ribosomal subunit biogenesis GTPase RsgA from Pseudomonas aeruginosa (strain ATCC 15692 / DSM 22644 / CIP 104116 / JCM 14847 / LMG 12228 / 1C / PRS 101 / PAO1).